The following is a 383-amino-acid chain: Acetylornithine deacetylase (383 aa).

Histidine 80 serves as a coordination point for Zn(2+). The active site involves aspartate 82. Aspartate 112 is a binding site for Zn(2+). Glutamate 144 is a catalytic residue. Glutamate 145, glutamate 169, and histidine 355 together coordinate Zn(2+).

This sequence belongs to the peptidase M20A family. ArgE subfamily. Homodimer. It depends on Zn(2+) as a cofactor. Co(2+) serves as cofactor. Requires glutathione as cofactor.

It is found in the cytoplasm. The enzyme catalyses N(2)-acetyl-L-ornithine + H2O = L-ornithine + acetate. It functions in the pathway amino-acid biosynthesis; L-arginine biosynthesis; L-ornithine from N(2)-acetyl-L-ornithine (linear): step 1/1. In terms of biological role, catalyzes the hydrolysis of the amide bond of N(2)-acetylated L-amino acids. Cleaves the acetyl group from N-acetyl-L-ornithine to form L-ornithine, an intermediate in L-arginine biosynthesis pathway, and a branchpoint in the synthesis of polyamines. The chain is Acetylornithine deacetylase from Escherichia coli O127:H6 (strain E2348/69 / EPEC).